The primary structure comprises 428 residues: tRNA(Ile2) 2-agmatinylcytidine synthetase TiaS (428 aa).

This sequence belongs to the TiaS family.

The protein resides in the cytoplasm. The enzyme catalyses cytidine(34) in tRNA(Ile2) + agmatine + ATP + H2O = 2-agmatinylcytidine(34) in tRNA(Ile2) + AMP + 2 phosphate + 2 H(+). ATP-dependent agmatine transferase that catalyzes the formation of 2-agmatinylcytidine (agm2C) at the wobble position (C34) of tRNA(Ile2), converting the codon specificity from AUG to AUA. This Methanosarcina acetivorans (strain ATCC 35395 / DSM 2834 / JCM 12185 / C2A) protein is tRNA(Ile2) 2-agmatinylcytidine synthetase TiaS.